Reading from the N-terminus, the 181-residue chain is MKRIITGCLLLNFAMAAQAECNISSSIQNIDYGKRSAAMRQVDRGKTTQLADRTITLVMQCDQDAHIRVQLNTANISNNGFGFGPNGSLNLIASDAFSGSNNLDLALASGKNDNPGSTGTASISTSPNNWLVFMQNGQEVVIDSGKSVSLTLTMAPAFKDEGELTDMTDITGNLTVLVEAK.

This is an uncharacterized protein from Escherichia coli (strain K12).